The sequence spans 349 residues: Hydroxymethylglutaryl-CoA synthase (349 aa).

(3S)-3-hydroxy-3-methylglutaryl-CoA contacts are provided by D29 and A30. The active-site Proton donor/acceptor is the E81. (3S)-3-hydroxy-3-methylglutaryl-CoA is bound by residues C113 and T154. The Acyl-thioester intermediate role is filled by C113. R202 contributes to the CoA binding site. (3S)-3-hydroxy-3-methylglutaryl-CoA contacts are provided by T204 and H237. H237 (proton donor/acceptor) is an active-site residue. Position 242 (K242) interacts with CoA. The (3S)-3-hydroxy-3-methylglutaryl-CoA site is built by K246, N269, and S299.

The protein belongs to the thiolase-like superfamily. Archaeal HMG-CoA synthase family. In terms of assembly, interacts with acetoacetyl-CoA thiolase that catalyzes the precedent step in the pathway and with a DUF35 protein. The acetoacetyl-CoA thiolase/HMG-CoA synthase complex channels the intermediate via a fused CoA-binding site, which allows for efficient coupling of the endergonic thiolase reaction with the exergonic HMGCS reaction.

It catalyses the reaction acetoacetyl-CoA + acetyl-CoA + H2O = (3S)-3-hydroxy-3-methylglutaryl-CoA + CoA + H(+). Its pathway is metabolic intermediate biosynthesis; (R)-mevalonate biosynthesis; (R)-mevalonate from acetyl-CoA: step 2/3. Its function is as follows. Catalyzes the condensation of acetyl-CoA with acetoacetyl-CoA to form 3-hydroxy-3-methylglutaryl-CoA (HMG-CoA). Functions in the mevalonate (MVA) pathway leading to isopentenyl diphosphate (IPP), a key precursor for the biosynthesis of isoprenoid compounds that are building blocks of archaeal membrane lipids. The sequence is that of Hydroxymethylglutaryl-CoA synthase from Methanosarcina mazei (strain ATCC BAA-159 / DSM 3647 / Goe1 / Go1 / JCM 11833 / OCM 88) (Methanosarcina frisia).